Here is a 657-residue protein sequence, read N- to C-terminus: 1-deoxy-D-xylulose-5-phosphate synthase (657 aa).

Thiamine diphosphate contacts are provided by residues histidine 73 and 113–115 (SHA). A Mg(2+)-binding site is contributed by aspartate 145. Thiamine diphosphate is bound by residues 146–147 (GA), asparagine 175, tyrosine 293, and glutamate 375. Asparagine 175 serves as a coordination point for Mg(2+).

Belongs to the transketolase family. DXPS subfamily. As to quaternary structure, homodimer. The cofactor is Mg(2+). Thiamine diphosphate serves as cofactor.

It carries out the reaction D-glyceraldehyde 3-phosphate + pyruvate + H(+) = 1-deoxy-D-xylulose 5-phosphate + CO2. Its pathway is metabolic intermediate biosynthesis; 1-deoxy-D-xylulose 5-phosphate biosynthesis; 1-deoxy-D-xylulose 5-phosphate from D-glyceraldehyde 3-phosphate and pyruvate: step 1/1. Its function is as follows. Catalyzes the acyloin condensation reaction between C atoms 2 and 3 of pyruvate and glyceraldehyde 3-phosphate to yield 1-deoxy-D-xylulose-5-phosphate (DXP). The sequence is that of 1-deoxy-D-xylulose-5-phosphate synthase from Renibacterium salmoninarum (strain ATCC 33209 / DSM 20767 / JCM 11484 / NBRC 15589 / NCIMB 2235).